Consider the following 453-residue polypeptide: UDP-N-acetylmuramate--L-alanyl-gamma-D-glutamyl-meso-2,6-diaminoheptandioate ligase (453 aa).

Residue 111-117 (GTHGKTT) coordinates ATP.

This sequence belongs to the MurCDEF family. Mpl subfamily. Mg(2+) serves as cofactor.

It carries out the reaction UDP-N-acetyl-alpha-D-muramate + L-alanyl-gamma-D-glutamyl-meso-2,6-diaminopimelate + ATP = UDP-N-acetyl-alpha-D-muramoyl-L-alanyl-gamma-D-glutamyl-meso-2,6-diaminopimelate + ADP + phosphate + H(+). The protein operates within cell wall biogenesis; peptidoglycan recycling. Functionally, reutilizes the intact tripeptide L-alanyl-gamma-D-glutamyl-meso-diaminopimelate by linking it to UDP-N-acetylmuramate. The protein is UDP-N-acetylmuramate--L-alanyl-gamma-D-glutamyl-meso-2,6-diaminoheptandioate ligase of Haemophilus influenzae (strain ATCC 51907 / DSM 11121 / KW20 / Rd).